The chain runs to 259 residues: Indole-3-glycerol phosphate synthase (259 aa).

This sequence belongs to the TrpC family.

It catalyses the reaction 1-(2-carboxyphenylamino)-1-deoxy-D-ribulose 5-phosphate + H(+) = (1S,2R)-1-C-(indol-3-yl)glycerol 3-phosphate + CO2 + H2O. It functions in the pathway amino-acid biosynthesis; L-tryptophan biosynthesis; L-tryptophan from chorismate: step 4/5. This is Indole-3-glycerol phosphate synthase from Dehalococcoides mccartyi (strain CBDB1).